The sequence spans 164 residues: Protein-export protein SecB (164 aa).

This sequence belongs to the SecB family. Homotetramer, a dimer of dimers. One homotetramer interacts with 1 SecA dimer.

The protein localises to the cytoplasm. Functionally, one of the proteins required for the normal export of preproteins out of the cell cytoplasm. It is a molecular chaperone that binds to a subset of precursor proteins, maintaining them in a translocation-competent state. It also specifically binds to its receptor SecA. This chain is Protein-export protein SecB, found in Nitrosococcus oceani (strain ATCC 19707 / BCRC 17464 / JCM 30415 / NCIMB 11848 / C-107).